The following is a 300-amino-acid chain: GTPase Era (300 aa).

Residues 6–173 (HSGFVAILGR…IESLVNTLPE (168 aa)) form the Era-type G domain. Residues 14-21 (GRPNVGKS) are G1. 14–21 (GRPNVGKS) provides a ligand contact to GTP. The interval 40–44 (QTTRN) is G2. The tract at residues 61-64 (DTPG) is G3. GTP-binding positions include 61-65 (DTPGI) and 123-126 (NKID). A G4 region spans residues 123–126 (NKID). Positions 152-154 (ISA) are G5. Residues 204 to 281 (TREEVPHSVA…YLELWVKVQP (78 aa)) enclose the KH type-2 domain.

It belongs to the TRAFAC class TrmE-Era-EngA-EngB-Septin-like GTPase superfamily. Era GTPase family. As to quaternary structure, monomer.

Its subcellular location is the cytoplasm. It is found in the cell membrane. Functionally, an essential GTPase that binds both GDP and GTP, with rapid nucleotide exchange. Plays a role in 16S rRNA processing and 30S ribosomal subunit biogenesis and possibly also in cell cycle regulation and energy metabolism. In Ligilactobacillus salivarius (strain UCC118) (Lactobacillus salivarius), this protein is GTPase Era.